We begin with the raw amino-acid sequence, 571 residues long: DDB1- and CUL4-associated factor 11 homolog (571 aa).

The tract at residues 51-75 is disordered; the sequence is RMKPNHSNDSDTDFSSDDEGCPKMT. Over residues 60-69 the composition is skewed to acidic residues; that stretch reads SDTDFSSDDE. WD repeat units lie at residues 162–201, 266–305, 309–349, 357–396, 435–479, and 482–521; these read RVAT…SKYR, RDHC…RIRT, AHED…DGDV, GHRD…NMSG, GHSV…VSRR, and GHTA…EGVI.

It belongs to the WD repeat LEC14B family.

In terms of biological role, involved in regulation of lifespan. Required for dopaminergic CEP neuron degeneration in response to Mn(2+). Inhibits the skn-1-mediated up-regulation of tatn-1. The polypeptide is DDB1- and CUL4-associated factor 11 homolog (Caenorhabditis elegans).